Reading from the N-terminus, the 304-residue chain is N-acetyl-D-glucosamine kinase (304 aa).

Residues 4–11 and 133–140 contribute to the ATP site; these read GFDMGGTK and GVGGGLIV. Zn(2+)-binding residues include histidine 157, cysteine 177, cysteine 179, and cysteine 184.

This sequence belongs to the ROK (NagC/XylR) family. NagK subfamily.

It carries out the reaction N-acetyl-D-glucosamine + ATP = N-acetyl-D-glucosamine 6-phosphate + ADP + H(+). Its pathway is cell wall biogenesis; peptidoglycan recycling. Functionally, catalyzes the phosphorylation of N-acetyl-D-glucosamine (GlcNAc) derived from cell-wall degradation, yielding GlcNAc-6-P. In Yersinia pseudotuberculosis serotype IB (strain PB1/+), this protein is N-acetyl-D-glucosamine kinase.